The chain runs to 338 residues: Ketol-acid reductoisomerase (NADP(+)) (338 aa).

The KARI N-terminal Rossmann domain occupies 1-181 (MNVFYDKDAD…GGGRAGIIET (181 aa)). Residues 24–27 (YGSQ), Arg-47, and Ser-52 each bind NADP(+). Residue His-107 is part of the active site. Gly-133 contacts NADP(+). The region spanning 182-327 (NFREETETDL…AKLRAMMPWI (146 aa)) is the KARI C-terminal knotted domain. Residues Asp-190, Glu-194, Glu-226, and Glu-230 each coordinate Mg(2+). Ser-251 is a substrate binding site.

This sequence belongs to the ketol-acid reductoisomerase family. It depends on Mg(2+) as a cofactor.

It catalyses the reaction (2R)-2,3-dihydroxy-3-methylbutanoate + NADP(+) = (2S)-2-acetolactate + NADPH + H(+). The catalysed reaction is (2R,3R)-2,3-dihydroxy-3-methylpentanoate + NADP(+) = (S)-2-ethyl-2-hydroxy-3-oxobutanoate + NADPH + H(+). It participates in amino-acid biosynthesis; L-isoleucine biosynthesis; L-isoleucine from 2-oxobutanoate: step 2/4. The protein operates within amino-acid biosynthesis; L-valine biosynthesis; L-valine from pyruvate: step 2/4. Its function is as follows. Involved in the biosynthesis of branched-chain amino acids (BCAA). Catalyzes an alkyl-migration followed by a ketol-acid reduction of (S)-2-acetolactate (S2AL) to yield (R)-2,3-dihydroxy-isovalerate. In the isomerase reaction, S2AL is rearranged via a Mg-dependent methyl migration to produce 3-hydroxy-3-methyl-2-ketobutyrate (HMKB). In the reductase reaction, this 2-ketoacid undergoes a metal-dependent reduction by NADPH to yield (R)-2,3-dihydroxy-isovalerate. This chain is Ketol-acid reductoisomerase (NADP(+)), found in Burkholderia cenocepacia (strain ATCC BAA-245 / DSM 16553 / LMG 16656 / NCTC 13227 / J2315 / CF5610) (Burkholderia cepacia (strain J2315)).